We begin with the raw amino-acid sequence, 514 residues long: Cytochrome P450 monooxygenase ptmQ (514 aa).

A helical transmembrane segment spans residues 3–23 (YVAQSPWIATLIVTATTYCTL). Residue Asn-148 is glycosylated (N-linked (GlcNAc...) asparagine). Position 452 (Cys-452) interacts with heme. Asn-486 carries N-linked (GlcNAc...) asparagine glycosylation.

It belongs to the cytochrome P450 family. Requires heme as cofactor.

It is found in the membrane. Its pathway is secondary metabolite biosynthesis. Its function is as follows. Cytochrome P450 monooxygenase; part of the gene cluster that mediates the biosynthesis of the indole diterpenes penitrems. The geranylgeranyl diphosphate (GGPP) synthase ptmG catalyzes the first step in penitrem biosynthesis via conversion of farnesyl pyrophosphate and isopentyl pyrophosphate into geranylgeranyl pyrophosphate (GGPP). Condensation of indole-3-glycerol phosphate with GGPP by the prenyl transferase ptmC then forms 3-geranylgeranylindole (3-GGI). Epoxidation by the FAD-dependent monooxygenase ptmM leads to a epoxidized-GGI that is substrate of the terpene cyclase ptmB for cyclization to yield paspaline. Paspaline is subsequently converted to 13-desoxypaxilline by the cytochrome P450 monooxygenase ptmP, the latter being then converted to paxilline by the cytochrome P450 monooxygenase ptmQ. Paxilline is converted to beta-paxitriol via C-10 ketoreduction by the short-chain dehydrogenase ptmH which can be monoprenylated at the C-20 by the indole diterpene prenyltransferase ptmD. A two-step elimination (acetylation and elimination) process performed by the O-acetyltransferase ptmV and ptmI leads to the production of the prenylated form of penijanthine. The FAD-linked oxidoreductase ptmO then converts the prenylated form of penijanthine into PC-M5 which is in turn transformed into PC-M4 by the aromatic dimethylallyltransferase ptmE. Five sequential oxidative transformations performed by the cytochrome P450 monooxygenases ptmK, ptmU, ptmL, ptmN and ptmJ yield the various penitrem compounds. PtmK, ptmU and ptmM are involved in the formation of the key bicyclic ring of penitrem C via the formation of the intermediates secopenitrem D and penitrem D. PtmL catalyzes the epoxidation of penitrem D and C to yield penitrem B and F, respectively. PtmJ catalyzes the last benzylic hydroxylation to convert penitrem B to prenitrem E and penitrem F to penitrem A. The polypeptide is Cytochrome P450 monooxygenase ptmQ (Penicillium ochrochloron).